Reading from the N-terminus, the 507-residue chain is Inositol-3-phosphate synthase (507 aa).

NAD(+) contacts are provided by Gly-70, Gly-71, Asn-72, Asn-73, Asp-143, Ile-180, Gln-190, Arg-193, Thr-230, Ala-231, Asn-232, Thr-233, Gly-281, Ser-282, Asp-306, Ser-309, Asn-340, Asn-341, Asp-342, Lys-355, Ala-391, Asp-419, and Ser-420.

The protein belongs to the myo-inositol 1-phosphate synthase family. NAD(+) is required as a cofactor.

It is found in the cytoplasm. The protein localises to the cytosol. The protein resides in the nucleus. It catalyses the reaction D-glucose 6-phosphate = 1D-myo-inositol 3-phosphate. Its pathway is polyol metabolism; myo-inositol biosynthesis; myo-inositol from D-glucose 6-phosphate: step 1/2. Key enzyme in myo-inositol biosynthesis pathway that catalyzes the conversion of glucose 6-phosphate to 1-myo-inositol 1-phosphate in a NAD-dependent manner. This is Inositol-3-phosphate synthase from Citrus paradisi (Grapefruit).